The following is a 93-amino-acid chain: Small ribosomal subunit protein uS19 (93 aa).

The protein belongs to the universal ribosomal protein uS19 family.

Its function is as follows. Protein S19 forms a complex with S13 that binds strongly to the 16S ribosomal RNA. In Karelsulcia muelleri (strain GWSS) (Sulcia muelleri), this protein is Small ribosomal subunit protein uS19.